The sequence spans 206 residues: Small ribosomal subunit protein uS4 (206 aa).

Residues 96–156 form the S4 RNA-binding domain; the sequence is RRLDNVVYRM…EKSKNQLRIK (61 aa).

Belongs to the universal ribosomal protein uS4 family. As to quaternary structure, part of the 30S ribosomal subunit. Contacts protein S5. The interaction surface between S4 and S5 is involved in control of translational fidelity.

One of the primary rRNA binding proteins, it binds directly to 16S rRNA where it nucleates assembly of the body of the 30S subunit. In terms of biological role, with S5 and S12 plays an important role in translational accuracy. In Hahella chejuensis (strain KCTC 2396), this protein is Small ribosomal subunit protein uS4.